The following is a 369-amino-acid chain: NAD(P)H-quinone oxidoreductase subunit 1, chloroplastic (369 aa).

The next 8 membrane-spanning stretches (helical) occupy residues 29 to 49 (IWII…VLVI), 97 to 117 (IWLF…SYLV), 129 to 149 (LGIG…GLLM), 167 to 187 (AAQS…ISLL), 205 to 225 (LLGW…ISSL), 255 to 275 (FGLF…FVTV), 305 to 325 (IINA…FLFV), and 348 to 368 (FLLP…ILLL).

It belongs to the complex I subunit 1 family. In terms of assembly, NDH is composed of at least 16 different subunits, 5 of which are encoded in the nucleus.

The protein resides in the plastid. It is found in the chloroplast thylakoid membrane. It catalyses the reaction a plastoquinone + NADH + (n+1) H(+)(in) = a plastoquinol + NAD(+) + n H(+)(out). It carries out the reaction a plastoquinone + NADPH + (n+1) H(+)(in) = a plastoquinol + NADP(+) + n H(+)(out). In terms of biological role, NDH shuttles electrons from NAD(P)H:plastoquinone, via FMN and iron-sulfur (Fe-S) centers, to quinones in the photosynthetic chain and possibly in a chloroplast respiratory chain. The immediate electron acceptor for the enzyme in this species is believed to be plastoquinone. Couples the redox reaction to proton translocation, and thus conserves the redox energy in a proton gradient. In Angiopteris evecta (Mule's foot fern), this protein is NAD(P)H-quinone oxidoreductase subunit 1, chloroplastic.